The sequence spans 1025 residues: Multidrug resistance protein MdtC (1025 aa).

The next 12 helical transmembrane spans lie at Phe3–Leu23, Glu333–Leu353, Ile360–Cys380, Leu387–Leu407, Val431–Leu451, Phe463–Pro483, Leu528–Pro548, Val853–Ser873, Val875–Leu895, Leu897–Val917, Pro953–Gly973, and Ile984–Val1004.

It belongs to the resistance-nodulation-cell division (RND) (TC 2.A.6) family. MdtC subfamily. Part of a tripartite efflux system composed of MdtA, MdtB and MdtC. MdtC forms a heteromultimer with MdtB.

The protein resides in the cell inner membrane. The MdtABC tripartite complex confers resistance against novobiocin and deoxycholate. In Escherichia coli O81 (strain ED1a), this protein is Multidrug resistance protein MdtC.